An 81-amino-acid chain; its full sequence is MAHSVKIYATCIGCTQCVRACPTDVLEMVPWDGCKANQIASAPRTEDCVGCKRCESACPTDFLSVRVYLGNESTRSMGLAY.

2 consecutive 4Fe-4S ferredoxin-type domains span residues 2-31 and 39-68; these read AHSVKIYATCIGCTQCVRACPTDVLEMVPW and IASAPRTEDCVGCKRCESACPTDFLSVRVY. Positions 11, 14, 17, 21, 48, 51, 54, and 58 each coordinate [4Fe-4S] cluster.

As to quaternary structure, the eukaryotic PSI reaction center is composed of at least 11 subunits. [4Fe-4S] cluster is required as a cofactor.

It localises to the plastid. Its subcellular location is the chloroplast thylakoid membrane. The catalysed reaction is reduced [plastocyanin] + hnu + oxidized [2Fe-2S]-[ferredoxin] = oxidized [plastocyanin] + reduced [2Fe-2S]-[ferredoxin]. Its function is as follows. Apoprotein for the two 4Fe-4S centers FA and FB of photosystem I (PSI); essential for photochemical activity. FB is the terminal electron acceptor of PSI, donating electrons to ferredoxin. The C-terminus interacts with PsaA/B/D and helps assemble the protein into the PSI complex. Required for binding of PsaD and PsaE to PSI. PSI is a plastocyanin-ferredoxin oxidoreductase, converting photonic excitation into a charge separation, which transfers an electron from the donor P700 chlorophyll pair to the spectroscopically characterized acceptors A0, A1, FX, FA and FB in turn. This chain is Photosystem I iron-sulfur center, found in Mesostigma viride (Green alga).